A 492-amino-acid chain; its full sequence is Homoserine O-acetyltransferase (492 aa).

Residues 47 to 352 (NAILVFHALS…KSIYGHDAFL (306 aa)) form the AB hydrolase-1 domain. Residue S152 is the Nucleophile of the active site. R221 contacts substrate. Residues D315 and H348 contribute to the active site. Position 349 (D349) interacts with substrate. CBS domains follow at residues 375–431 (MTKN…ENSI) and 440–492 (MTKN…TITI).

It belongs to the AB hydrolase superfamily. MetX family. As to quaternary structure, homodimer.

It localises to the cytoplasm. The enzyme catalyses L-homoserine + acetyl-CoA = O-acetyl-L-homoserine + CoA. It participates in amino-acid biosynthesis; L-methionine biosynthesis via de novo pathway; O-acetyl-L-homoserine from L-homoserine: step 1/1. In terms of biological role, transfers an acetyl group from acetyl-CoA to L-homoserine, forming acetyl-L-homoserine. The chain is Homoserine O-acetyltransferase from Methanococcus vannielii (strain ATCC 35089 / DSM 1224 / JCM 13029 / OCM 148 / SB).